Reading from the N-terminus, the 82-residue chain is DNA-directed RNA polymerase subunit Rpo5 (82 aa).

This sequence belongs to the archaeal Rpo5/eukaryotic RPB5 RNA polymerase subunit family. As to quaternary structure, part of the RNA polymerase complex.

It is found in the cytoplasm. It carries out the reaction RNA(n) + a ribonucleoside 5'-triphosphate = RNA(n+1) + diphosphate. Functionally, DNA-dependent RNA polymerase (RNAP) catalyzes the transcription of DNA into RNA using the four ribonucleoside triphosphates as substrates. The chain is DNA-directed RNA polymerase subunit Rpo5 from Pyrococcus horikoshii (strain ATCC 700860 / DSM 12428 / JCM 9974 / NBRC 100139 / OT-3).